Reading from the N-terminus, the 687-residue chain is Follicle-stimulating hormone receptor (687 aa).

An N-terminal signal peptide occupies residues 1-17 (MALLLVSLLAFLSLGSG). The region spanning 18–46 (CHHQVCHYSNRVFLCQESKVTEIPSDLPR) is the LRRNT domain. Residues 18–358 (CHHQVCHYSN…EDIMGYDILR (341 aa)) are Extracellular-facing. Residues Cys-23 and Cys-32 are joined by a disulfide bond. 9 LRR repeats span residues 49–72 (LELR…FGDL), 73–97 (KKIE…LPKL), 98–118 (HEIR…AFQN), 119–143 (LPNL…KIQS), 144–169 (LQKV…MGLS), 170–192 (FESM…AFNG), 193–216 (TQLD…VFQG), 217–240 (ASGP…GLEN), and 241–259 (LKKL…PSLE). N-linked (GlcNAc...) asparagine glycans are attached at residues Asn-191 and Asn-199. Intrachain disulfides connect Cys-275–Cys-338, Cys-276–Cys-292, Cys-276–Cys-348, and Cys-292–Cys-330. Asn-293 carries N-linked (GlcNAc...) asparagine glycosylation. Tyr-327 is modified (sulfotyrosine). Residues 359 to 379 (VLIWFISILAITGNIIVLVIL) form a helical membrane-spanning segment. Over 380–390 (ITSQYKLTVPR) the chain is Cytoplasmic. A helical transmembrane segment spans residues 391–413 (FLMCNLAFADLCIGIYLLLIASV). The Extracellular segment spans residues 414–435 (DIHTKSQYHNYAIDWQTGAGCD). Cys-434 and Cys-509 are joined by a disulfide. Residues 436–457 (AAGFFTVFGSELSVYTLTAITL) form a helical membrane-spanning segment. Topologically, residues 458 to 477 (ERWHTITHAMQLECKVQLRH) are cytoplasmic. A helical membrane pass occupies residues 478–500 (AASVMLVGWIFGFGVGLLPIFGI). At 501 to 520 (STYMKVSICLPMDIDSPLSQ) the chain is on the extracellular side. Residues 521–542 (LYVMSLLVLNVLAFVVICGCYT) form a helical membrane-spanning segment. Topologically, residues 543 to 565 (HIYLTVRNPNIVSSSSDTKIAKR) are cytoplasmic. The helical transmembrane segment at 566-589 (MGILIFTDFLCMAPISFFGISASL) threads the bilayer. At 590–600 (KVALITVSKSK) the chain is on the extracellular side. A helical membrane pass occupies residues 601-622 (ILLVLFYPINSCANPFLYAIFT). Topologically, residues 623 to 687 (KNFRRDFFIL…LVPLSHLAQN (65 aa)) are cytoplasmic.

The protein belongs to the G-protein coupled receptor 1 family. FSH/LSH/TSH subfamily. As to quaternary structure, homotrimer. Functions as a homotrimer binding the FSH hormone heterodimer composed of CGA and FSHB. Interacts with ARRB2. Interacts with APPL2; interaction is independent of follicle stimulating hormone stimulation. N-glycosylated; indirectly required for FSH-binding, possibly via a conformational change that allows high affinity binding of hormone. Post-translationally, sulfated.

The protein resides in the cell membrane. In terms of biological role, g protein-coupled receptor for follitropin, the follicle-stimulating hormone. Through cAMP production activates the downstream PI3K-AKT and ERK1/ERK2 signaling pathways. The sequence is that of Follicle-stimulating hormone receptor (FSHR) from Equus asinus (Donkey).